The following is a 414-amino-acid chain: Bystin (414 aa).

The span at 1-11 shows a compositional bias: basic residues; the sequence is MSAKRNTKLRH. A disordered region spans residues 1–91; the sequence is MSAKRNTKLR…PSDDEGQADD (91 aa). Residues 12–24 show a composition bias toward basic and acidic residues; it reads APLEHAYVDDKSV. Residues 25–34 are compositionally biased toward basic residues; sequence RRNKRSKQRG.

The protein belongs to the bystin family.

The protein resides in the nucleus. It localises to the nucleolus. Its function is as follows. Required for processing of 20S pre-rRNA precursor and biogenesis of 40S ribosomal subunits. The polypeptide is Bystin (bysl) (Monosiga brevicollis (Choanoflagellate)).